Consider the following 584-residue polypeptide: 2-isopropylmalate synthase (584 aa).

Residues 45-323 (PRWLSTDLRD…SPNLDFSKLD (279 aa)) form the Pyruvate carboxyltransferase domain. Positions 54, 262, 264, and 298 each coordinate a divalent metal cation.

It belongs to the alpha-IPM synthase/homocitrate synthase family. LeuA type 2 subfamily. As to quaternary structure, homodimer. The cofactor is a divalent metal cation.

It catalyses the reaction 3-methyl-2-oxobutanoate + acetyl-CoA + H2O = (2S)-2-isopropylmalate + CoA + H(+). It functions in the pathway amino-acid biosynthesis; L-leucine biosynthesis; L-leucine from 3-methyl-2-oxobutanoate: step 1/4. Catalyzes the condensation of the acetyl group of acetyl-CoA with 3-methyl-2-oxobutanoate (2-oxoisovalerate) to form 3-carboxy-3-hydroxy-4-methylpentanoate (2-isopropylmalate). The protein is 2-isopropylmalate synthase (leu3) of Schizosaccharomyces pombe (strain 972 / ATCC 24843) (Fission yeast).